The chain runs to 582 residues: DNA mismatch repair protein MutL (582 aa).

This sequence belongs to the DNA mismatch repair MutL/HexB family.

This protein is involved in the repair of mismatches in DNA. It is required for dam-dependent methyl-directed DNA mismatch repair. May act as a 'molecular matchmaker', a protein that promotes the formation of a stable complex between two or more DNA-binding proteins in an ATP-dependent manner without itself being part of a final effector complex. This is DNA mismatch repair protein MutL from Chlamydia abortus (strain DSM 27085 / S26/3) (Chlamydophila abortus).